A 409-amino-acid chain; its full sequence is 2,3-bisphosphoglycerate-independent phosphoglycerate mutase (409 aa).

Positions 160–179 (ITDADPKHEGNKPKTVKPLD) are disordered.

It belongs to the BPG-independent phosphoglycerate mutase family. A-PGAM subfamily.

It carries out the reaction (2R)-2-phosphoglycerate = (2R)-3-phosphoglycerate. Its pathway is carbohydrate degradation; glycolysis; pyruvate from D-glyceraldehyde 3-phosphate: step 3/5. Catalyzes the interconversion of 2-phosphoglycerate and 3-phosphoglycerate. The polypeptide is 2,3-bisphosphoglycerate-independent phosphoglycerate mutase (Methanosphaera stadtmanae (strain ATCC 43021 / DSM 3091 / JCM 11832 / MCB-3)).